Consider the following 250-residue polypeptide: Small ribosomal subunit protein uS2 (250 aa).

The protein belongs to the universal ribosomal protein uS2 family.

The sequence is that of Small ribosomal subunit protein uS2 from Polaromonas sp. (strain JS666 / ATCC BAA-500).